A 92-amino-acid polypeptide reads, in one-letter code: DNA-directed RNA polymerase subunit Rpo11 (92 aa).

It belongs to the archaeal Rpo11/eukaryotic RPB11/RPC19 RNA polymerase subunit family. Part of the 13-subunit RNA polymerase complex.

The protein resides in the cytoplasm. The catalysed reaction is RNA(n) + a ribonucleoside 5'-triphosphate = RNA(n+1) + diphosphate. Its function is as follows. DNA-dependent RNA polymerase (RNAP) catalyzes the transcription of DNA into RNA using the four ribonucleoside triphosphates as substrates. This Saccharolobus solfataricus (strain ATCC 35092 / DSM 1617 / JCM 11322 / P2) (Sulfolobus solfataricus) protein is DNA-directed RNA polymerase subunit Rpo11.